A 142-amino-acid chain; its full sequence is Putative pre-16S rRNA nuclease (142 aa).

The protein belongs to the YqgF nuclease family.

It localises to the cytoplasm. In terms of biological role, could be a nuclease involved in processing of the 5'-end of pre-16S rRNA. This Lawsonia intracellularis (strain PHE/MN1-00) protein is Putative pre-16S rRNA nuclease.